The sequence spans 142 residues: Hemoglobin subunit pi (142 aa).

A Globin domain is found at 2–142; sequence ALTQAEKAAV…ISSVLTEKYR (141 aa). 2 residues coordinate heme b: His-59 and His-88.

This sequence belongs to the globin family.

Its function is as follows. The pi' chain is the counterpart of the alpha chain in the major early embryonic hemoglobin P. This is Hemoglobin subunit pi from Gallus gallus (Chicken).